The sequence spans 215 residues: Outer-membrane lipoprotein carrier protein (215 aa).

The N-terminal stretch at 1 to 24 (MFVLKARHLMAAGLVSLAAWSAGA) is a signal peptide.

The protein belongs to the LolA family. In terms of assembly, monomer.

The protein localises to the periplasm. In terms of biological role, participates in the translocation of lipoproteins from the inner membrane to the outer membrane. Only forms a complex with a lipoprotein if the residue after the N-terminal Cys is not an aspartate (The Asp acts as a targeting signal to indicate that the lipoprotein should stay in the inner membrane). This chain is Outer-membrane lipoprotein carrier protein, found in Ralstonia nicotianae (strain ATCC BAA-1114 / GMI1000) (Ralstonia solanacearum).